Here is a 160-residue protein sequence, read N- to C-terminus: Cytosolic iron-sulfur assembly component 2A (160 aa).

Residues H89, H123, E150, and E153 each contribute to the Zn(2+) site.

It belongs to the MIP18 family. Monomer and homodimer. Component of the CIA complex. Interacts with CIAO1. Interacts with IREB2. Interacts with APAF1. In terms of tissue distribution, substantially enriched in macrophages.

It localises to the cytoplasm. Its function is as follows. Component of the cytosolic iron-sulfur protein assembly (CIA) complex, a multiprotein complex that mediates the incorporation of iron-sulfur cluster into extramitochondrial Fe/S proteins. As a CIA complex component and in collaboration with CIAO1 specifically matures ACO1 and stabilizes IREB2, connecting cytosolic iron-sulfur protein maturation with cellular iron regulation. May play a role in chromosome segregation through establishment of sister chromatid cohesion. May induce apoptosis in collaboration with APAF1. The sequence is that of Cytosolic iron-sulfur assembly component 2A from Homo sapiens (Human).